The chain runs to 208 residues: Small ribosomal subunit protein uS5 (208 aa).

The span at 1 to 19 (MTDSNNQSPNKKTSGSSGA) shows a compositional bias: polar residues. Residues 1-54 (MTDSNNQSPNKKTSGSSGAPTAADGRQENRRSRGEKRGGRRDRRGQERDSEWQE) form a disordered region. Basic and acidic residues-rich tracts occupy residues 25 to 37 (GRQENRRSRGEKR) and 44 to 54 (RGQERDSEWQE). In terms of domain architecture, S5 DRBM spans 52-115 (WQERVVQIRR…ADGKKHLVRV (64 aa)).

Belongs to the universal ribosomal protein uS5 family. In terms of assembly, part of the 30S ribosomal subunit. Contacts proteins S4 and S8.

With S4 and S12 plays an important role in translational accuracy. Functionally, located at the back of the 30S subunit body where it stabilizes the conformation of the head with respect to the body. This chain is Small ribosomal subunit protein uS5, found in Prochlorococcus marinus (strain NATL1A).